The primary structure comprises 352 residues: Thymidine kinase (352 aa).

26-33 provides a ligand contact to ATP; it reads GSMGIGKT. The active-site Proton acceptor is Glu-54. A substrate-binding site is contributed by Gln-95. Arg-185 provides a ligand contact to ATP. Substrate is bound at residue Arg-191.

It belongs to the herpesviridae thymidine kinase family. Homodimer.

It carries out the reaction thymidine + ATP = dTMP + ADP + H(+). Catalyzes the transfer of the gamma-phospho group of ATP to thymidine to generate dTMP in the salvage pathway of pyrimidine synthesis. The dTMP serves as a substrate for DNA polymerase during viral DNA replication. Allows the virus to be reactivated and to grow in non-proliferative cells lacking a high concentration of phosphorylated nucleic acid precursors. The sequence is that of Thymidine kinase from Gallus gallus (Chicken).